Consider the following 554-residue polypeptide: Carboxylesterase 1C (554 aa).

The N-terminal stretch at 1 to 18 is a signal peptide; it reads MWLHALVWASLAVCPILG. N-linked (GlcNAc...) asparagine glycosylation occurs at asparagine 79. A disulfide bridge links cysteine 87 with cysteine 116. The Acyl-ester intermediate role is filled by serine 221. Cysteine 273 and cysteine 284 are joined by a disulfide. 2 N-linked (GlcNAc...) asparagine glycosylation sites follow: asparagine 274 and asparagine 304. Catalysis depends on glutamate 342, which acts as the Charge relay system. N-linked (GlcNAc...) asparagine glycosylation occurs at asparagine 377. Catalysis depends on histidine 455, which acts as the Charge relay system. A Phosphoserine modification is found at serine 473. Asparagine 478 carries N-linked (GlcNAc...) asparagine glycosylation. Residues 551 to 554 carry the Prevents secretion from ER motif; that stretch reads TEHK.

This sequence belongs to the type-B carboxylesterase/lipase family. As to expression, expressed in lung, kidney and liver.

It is found in the endoplasmic reticulum lumen. The enzyme catalyses a carboxylic ester + H2O = an alcohol + a carboxylate + H(+). In terms of biological role, involved in the detoxification of xenobiotics and in the activation of ester and amide prodrugs. Involved in the extracellular metabolism of lung surfactant. The chain is Carboxylesterase 1C (Ces1c) from Mus musculus (Mouse).